Here is a 508-residue protein sequence, read N- to C-terminus: ATP synthase subunit alpha (508 aa).

169 to 176 lines the ATP pocket; that stretch reads GDRQTGKT.

The protein belongs to the ATPase alpha/beta chains family. F-type ATPases have 2 components, CF(1) - the catalytic core - and CF(0) - the membrane proton channel. CF(1) has five subunits: alpha(3), beta(3), gamma(1), delta(1), epsilon(1). CF(0) has three main subunits: a(1), b(2) and c(9-12). The alpha and beta chains form an alternating ring which encloses part of the gamma chain. CF(1) is attached to CF(0) by a central stalk formed by the gamma and epsilon chains, while a peripheral stalk is formed by the delta and b chains.

Its subcellular location is the cell inner membrane. The enzyme catalyses ATP + H2O + 4 H(+)(in) = ADP + phosphate + 5 H(+)(out). Functionally, produces ATP from ADP in the presence of a proton gradient across the membrane. The alpha chain is a regulatory subunit. This Allorhizobium ampelinum (strain ATCC BAA-846 / DSM 112012 / S4) (Agrobacterium vitis (strain S4)) protein is ATP synthase subunit alpha.